Reading from the N-terminus, the 564-residue chain is MAGKPGIQLFVIFLLLSSFAAVVWAMDNMPADKDVSKLFPLTLIHINDLHARFDETNMKSNACTAKDQCIAGIARVYQKIQDLLKEYKSKNAIYLNAGDNFQGTLWYNLLRWQVTADFITKLKPTAMTLGNHEFDHTPKGLAPYLAELDKAGIPTLVANLVMNDDPDLKSSKIQKSIKVTVGGKTIGIIGVLYDKTHEIAQTGKVTLSNAVETVKREAAALKKDKVDIIVVLSHCSYDEDKKIAKEAGQDIDVIVGAHSHSFLYSKESNKPYDQKDKIEGPYPTIVESNNKRKIPIVQAKSFGKYVGRLTLYFDNEGEVKHWEGYPEFIDNKVKQDPKILEALIPWRKKVQEIGSTKVGETTIELDRDSCRDKECTLGVLYADAFADHYTNSSFRPFAIIQAGNFRNPIKVGKITNGDIIEAAPFGSTADLIRLKGDNLWAVAEHSLALDDENRTNCLQVSGLRIVIDPSKSVGSRVVKIDVMDNRNPKSEDLKPLDRNAEYFIALPSYLADGKDGFSAMKEATARWTGPLDSDVFKSYVEKIKKVDKLKLDRVIVCKAGSPCT.

The first 25 residues, 1–25 (MAGKPGIQLFVIFLLLSSFAAVVWA), serve as a signal peptide directing secretion. A divalent metal cation contacts are provided by Asp-48, His-50, Asp-99, Asn-131, His-234, and His-258. Residue Arg-371 participates in AMP binding. An N-linked (GlcNAc...) asparagine glycan is attached at Asn-391. Residues Arg-406, Phe-425, and Asp-515 each coordinate AMP.

Belongs to the 5'-nucleotidase family. The cofactor is a divalent metal cation. Female salivary gland (at protein level). Low-level expression in male tissues. Not detected in female carcasses without salivary glands.

The protein localises to the secreted. The catalysed reaction is a ribonucleoside 5'-triphosphate + 2 H2O = a ribonucleoside 5'-phosphate + 2 phosphate + 2 H(+). Its function is as follows. Facilitates hematophagy by inhibiting ADP-dependent platelet aggregation in the host. Cleaves adenosine triphosphate (ATP) and adenosine diphosphate (ADP) to adenosine monophosphate (AMP) and inorganic phosphate. May reduce probing time by facilitating the speed of locating blood. The polypeptide is Apyrase (Aedes albopictus (Asian tiger mosquito)).